The following is an 87-amino-acid chain: HssA/B-like protein 56 (87 aa).

This sequence belongs to the hssA/B family.

The polypeptide is HssA/B-like protein 56 (hssl56) (Dictyostelium discoideum (Social amoeba)).